The primary structure comprises 624 residues: MTSPQALQLIKDPDRLESRLKEIPAEPGVYFMRDSQDQILYIGKSKKLRSRVRSYFRKFNELGPRLELMVRQVAEIEFIVTDTEAEALALEANLIKQHQPHFNVLLKDDKKYPYLCITWSEAYPRIFITRKRRAEAKDDRYYGPYTDTHLLRQTLGLVKRIFPLRQRPKPLFKDRPCLNFDIGRCPGVCQQLIASEDYRKTIHKVAMIFQGRTSELIDTLTPQMEAAAENLNFEQAARIRDQINGLKTLGEEQKVSLPDDTVSRDAIALAADEQHACIQLFQIRAGRLVGRLGFVADAQSGPPGAILQRVLEEHYAGADPVEIPAEILVQTELPEAEMLATYLTEYKGRKVTLLVPQRQSKAELIEMVERNAQYELARTQRFSDRNAEAQKDLAELLDLPELPQRIEGYDISHVQGSDAVASRVVFIDGLPAKQHYRHYKIKNPNVTAGHSDDFASLAEVVQRRFRKFIEHPETDRLSDPDWPDLIMIDGGKGQLSAVVNALSGTGLLEDLQIVSLAKQREEIFLPGESLPLNTDPDQPGVQLLRRLRDEAHRFAVSFHRQQRTERMRRSRLDEIPGLGYERQKQLLAAFRSIDYIREASPEQLATVPLIGPRLAQQIYDYFHP.

One can recognise a GIY-YIG domain in the interval 25 to 104 (AEPGVYFMRD…IKQHQPHFNV (80 aa)). The UVR domain occupies 214–249 (SELIDTLTPQMEAAAENLNFEQAARIRDQINGLKTL).

The protein belongs to the UvrC family. In terms of assembly, interacts with UvrB in an incision complex.

It is found in the cytoplasm. The UvrABC repair system catalyzes the recognition and processing of DNA lesions. UvrC both incises the 5' and 3' sides of the lesion. The N-terminal half is responsible for the 3' incision and the C-terminal half is responsible for the 5' incision. The polypeptide is UvrABC system protein C (Cyanothece sp. (strain PCC 7425 / ATCC 29141)).